We begin with the raw amino-acid sequence, 530 residues long: Glutamate--cysteine ligase (530 aa).

The protein belongs to the glutamate--cysteine ligase type 1 family. Type 1 subfamily.

The enzyme catalyses L-cysteine + L-glutamate + ATP = gamma-L-glutamyl-L-cysteine + ADP + phosphate + H(+). The protein operates within sulfur metabolism; glutathione biosynthesis; glutathione from L-cysteine and L-glutamate: step 1/2. In Azotobacter vinelandii (strain DJ / ATCC BAA-1303), this protein is Glutamate--cysteine ligase.